Here is a 299-residue protein sequence, read N- to C-terminus: Coenzyme PQQ synthesis protein B (299 aa).

It belongs to the PqqB family.

Its pathway is cofactor biosynthesis; pyrroloquinoline quinone biosynthesis. Functionally, may be involved in the transport of PQQ or its precursor to the periplasm. The sequence is that of Coenzyme PQQ synthesis protein B from Methylobacterium nodulans (strain LMG 21967 / CNCM I-2342 / ORS 2060).